A 403-amino-acid chain; its full sequence is Glucosyl-3-phosphoglycerate synthase (403 aa).

A divalent metal cation is bound at residue D150. 189–192 (GRVT) is a binding site for (2R)-3-phosphoglycerate. H273 is an a divalent metal cation binding site.

This sequence belongs to the glycosyltransferase 2 family. In terms of assembly, homodimer. Requires Mn(2+) as cofactor. Co(2+) is required as a cofactor. Mg(2+) serves as cofactor. The cofactor is Ni(2+).

The enzyme catalyses an NDP-alpha-D-glucose + (2R)-3-phosphoglycerate = (2R)-2-O-(alpha-D-glucopyranosyl)-3-phospho-glycerate + a ribonucleoside 5'-diphosphate + H(+). Functionally, involved in the biosynthesis of 6-O-methylglucose lipopolysaccarides (MGLPs). Catalyzes the transfer of a glucose (Glc) moiety from uridine diphosphate (UDP-Glc) to the position 2 of 3-phospho-D-glycerate (3-PGA) to form glucosyl-3-phosphoglycerate (GPG). GpgS is most active with UDP-glucose, followed by GDP-glucose, ADP-glucose, and to a lesser extent, TDP-glucose. 3-PGA is the only acceptor for these glucosyl donors. This is Glucosyl-3-phosphoglycerate synthase from Persephonella marina (strain DSM 14350 / EX-H1).